Consider the following 489-residue polypeptide: Dipeptide and tripeptide permease B (489 aa).

At methionine 1–arginine 27 the chain is on the cytoplasmic side. The chain crosses the membrane as a helical span at residues phenylalanine 28–serine 48. Topologically, residues glutamine 49 to alanine 52 are periplasmic. The helical transmembrane segment at phenylalanine 53–valine 73 threads the bilayer. The Cytoplasmic portion of the chain corresponds to glycine 74–arginine 82. Residues threonine 83–leucine 103 traverse the membrane as a helical segment. Residues lysine 104–aspartate 106 lie on the Periplasmic side of the membrane. The helical transmembrane segment at leucine 107–alanine 127 threads the bilayer. The Cytoplasmic segment spans residues serine 128–threonine 146. The helical transmembrane segment at leucine 147–alanine 167 threads the bilayer. Residues aspartate 168 to tyrosine 172 lie on the Periplasmic side of the membrane. The helical transmembrane segment at serine 173–cysteine 193 threads the bilayer. Residues arginine 194–serine 210 lie on the Cytoplasmic side of the membrane. Residues phenylalanine 211–leucine 231 traverse the membrane as a helical segment. Topologically, residues methionine 232–histidine 233 are periplasmic. A helical membrane pass occupies residues asparagine 234–phenylalanine 254. Topologically, residues arginine 255–lysine 267 are cytoplasmic. The chain crosses the membrane as a helical span at residues methionine 268–methionine 288. The Periplasmic portion of the chain corresponds to proline 289 to proline 311. Residues valine 312–isoleucine 332 form a helical membrane-spanning segment. The Cytoplasmic segment spans residues tyrosine 333–threonine 350. Residues leucine 351–alanine 371 form a helical membrane-spanning segment. The Periplasmic portion of the chain corresponds to aspartate 372–tryptophan 380. Residues phenylalanine 381 to leucine 401 traverse the membrane as a helical segment. Residues alanine 402–histidine 411 lie on the Cytoplasmic side of the membrane. A helical membrane pass occupies residues leucine 412–glycine 432. Residues tyrosine 433–asparagine 456 lie on the Periplasmic side of the membrane. Residues valine 457–proline 477 traverse the membrane as a helical segment. Topologically, residues tryptophan 478–histidine 489 are cytoplasmic.

This sequence belongs to the major facilitator superfamily. Proton-dependent oligopeptide transporter (POT/PTR) (TC 2.A.17) family. DtpB subfamily.

The protein resides in the cell inner membrane. Its function is as follows. Proton-dependent permease that transports di- and tripeptides. This Shigella dysenteriae serotype 1 (strain Sd197) protein is Dipeptide and tripeptide permease B.